Here is a 451-residue protein sequence, read N- to C-terminus: Phosphoglucosamine mutase (451 aa).

Ser-107 functions as the Phosphoserine intermediate in the catalytic mechanism. The Mg(2+) site is built by Ser-107, Asp-246, Asp-248, and Asp-250. Phosphoserine is present on Ser-107.

It belongs to the phosphohexose mutase family. Mg(2+) is required as a cofactor. In terms of processing, activated by phosphorylation.

The enzyme catalyses alpha-D-glucosamine 1-phosphate = D-glucosamine 6-phosphate. Functionally, catalyzes the conversion of glucosamine-6-phosphate to glucosamine-1-phosphate. This Burkholderia ambifaria (strain ATCC BAA-244 / DSM 16087 / CCUG 44356 / LMG 19182 / AMMD) (Burkholderia cepacia (strain AMMD)) protein is Phosphoglucosamine mutase.